Consider the following 443-residue polypeptide: MFLAQEIIRKKRNGLALSTEEIQFFVKGITTNAVSEGQIAALGMAVYFNDMNMDERIALTTAMRDSGTVLNWQSLGLNGPVIDKHSTGGVGDVISLMLGPMAAACGGYVPMISGRGLGHTGGTLDKFDAIPGYQTEPSSELFRKVVKDVGVAIIGQTGDLVPADKRFYSIRDNTATVESISLITASILSKKLACSLDALAMDVKVGSGAFMPTYEASEELARSIAAVANGAGTKTTALLTDMNQVLASCAGNAVEVKEAIDFLTGAYRNPRLYAVTMGLCAEMLLLGGLASDEADARAKLNRVLDNGRAAEIFGKMVSGLGGPVDFVENYSKYLPQSQIIRPVFADTQGYAYSMDTRELGLAVVTLGGGRRKPGDALDYSVGLTQVCALGDKIDASTPIAVIHAQSEEAFAQAEEAVKKAIHIDEVAPEKTPEIYAYIRASDL.

This sequence belongs to the thymidine/pyrimidine-nucleoside phosphorylase family. Homodimer.

The catalysed reaction is thymidine + phosphate = 2-deoxy-alpha-D-ribose 1-phosphate + thymine. Its pathway is pyrimidine metabolism; dTMP biosynthesis via salvage pathway; dTMP from thymine: step 1/2. Its function is as follows. The enzymes which catalyze the reversible phosphorolysis of pyrimidine nucleosides are involved in the degradation of these compounds and in their utilization as carbon and energy sources, or in the rescue of pyrimidine bases for nucleotide synthesis. This is Thymidine phosphorylase from Shewanella sp. (strain ANA-3).